We begin with the raw amino-acid sequence, 257 residues long: Deoxyribose-phosphate aldolase (257 aa).

Catalysis depends on aspartate 102, which acts as the Proton donor/acceptor. Catalysis depends on lysine 166, which acts as the Schiff-base intermediate with acetaldehyde. The active-site Proton donor/acceptor is the lysine 198.

Belongs to the DeoC/FbaB aldolase family. DeoC type 2 subfamily.

It localises to the cytoplasm. The catalysed reaction is 2-deoxy-D-ribose 5-phosphate = D-glyceraldehyde 3-phosphate + acetaldehyde. Its pathway is carbohydrate degradation; 2-deoxy-D-ribose 1-phosphate degradation; D-glyceraldehyde 3-phosphate and acetaldehyde from 2-deoxy-alpha-D-ribose 1-phosphate: step 2/2. Catalyzes a reversible aldol reaction between acetaldehyde and D-glyceraldehyde 3-phosphate to generate 2-deoxy-D-ribose 5-phosphate. This is Deoxyribose-phosphate aldolase from Shewanella halifaxensis (strain HAW-EB4).